Here is a 597-residue protein sequence, read N- to C-terminus: K(+) efflux antiporter 6 (597 aa).

The signal sequence occupies residues 1–35 (MVEGRRRRRFSLSSQQLALLLLLLSFFLCFSVASP). 12 consecutive transmembrane segments (helical) span residues 177–197 (LISD…AFAC), 201–221 (PVIT…LNFI), 224–244 (MVQV…ALGL), 257–277 (VAVL…GITV), 287–307 (GVFV…KFLM), 321–341 (IGIL…LPVL), 351–371 (MLSI…LSIL), 396–416 (LAAV…GLSL), 440–460 (IEPI…MLVN), 461–481 (VHFL…VIII), 499–519 (TALL…VLLS), and 543–563 (LVTT…GILL).

This sequence belongs to the monovalent cation:proton antiporter 2 (CPA2) transporter (TC 2.A.37) family. KEA (TC 2.A.37.1) subfamily. As to expression, expressed in roots, stems, leaves, flowers and silique.

It localises to the golgi apparatus membrane. The protein localises to the golgi apparatus. Its subcellular location is the trans-Golgi network membrane. It is found in the prevacuolar compartment membrane. The protein resides in the endomembrane system. The enzyme catalyses K(+)(in) + H(+)(out) = K(+)(out) + H(+)(in). Electroneutral K(+)/H(+) efflux antiporter involved in K(+) homeostasis and osmotic adjustment. Together with KEA4 and KEA5, promotes growth and development, and facilitates endosomal pH and ions homeostasis, as well as salt tolerance (e.g. K(+), NaCl and LiCl), probably by supporting cell wall biosynthesis during rapid etiolated seedling growth. The polypeptide is K(+) efflux antiporter 6 (Arabidopsis thaliana (Mouse-ear cress)).